The sequence spans 486 residues: Transcriptional adapter 2-beta (486 aa).

The ZZ-type zinc finger occupies Leu4–Phe59. Residues Cys9, Cys12, Cys23, Cys26, Cys32, Cys35, His45, and His49 each contribute to the Zn(2+) site. Residues Glu65–Asn118 enclose the SANT domain. Disordered stretches follow at residues Lys237 to Gln291 and Glu343 to Leu377. 2 stretches are compositionally biased toward gly residues: residues Gly247–Ser262 and Ser367–Leu377.

It is found in the nucleus. Functionally, transcriptional coactivator. The protein is Transcriptional adapter 2-beta (tada2b) of Danio rerio (Zebrafish).